Here is a 648-residue protein sequence, read N- to C-terminus: Protein KASH5 (648 aa).

Over 1–606 the chain is Cytoplasmic; that stretch reads MHSILRSSLS…HSPGIRISQH (606 aa). A disordered region spans residues 206–228; that stretch reads PEAEESANLESFGGEDPRPEGPA. A coiled-coil region spans residues 230–420; the sequence is AELLSNLEDL…EEQLSQSQEG (191 aa). Over residues 473–497 the composition is skewed to acidic residues; that stretch reads EVEPEPEPEPEPEPEPEPQEVEFPS. A disordered region spans residues 473–545; that stretch reads EVEPEPEPEP…EESWVLADPS (73 aa). Residues 607 to 627 form a helical; Anchor for type IV membrane protein membrane-spanning segment; that stretch reads PLVPTPVLGLLLLLLLSILLF. At 628 to 648 the chain is on the perinuclear space side; that stretch reads SQSPPPTWPHLQLYYLQPPPV.

In terms of assembly, core component the LINC complex which is composed of inner nuclear membrane SUN domain-containing proteins coupled to outer nuclear membrane KASH domain-containing nesprins. SUN and KASH domain-containing proteins seem to bind each other promiscuously; however, differentially expression of LINC complex constituents is giving rise to specific assemblies. At least SUN1/2-containing core LINC complexes are proposed to be hexameric composed of three protomers of each KASH and SUN domain-containing protein. Interacts with SUN1; this interaction mediates its telomere localization by forming a SUN1:KASH5 LINC complex. Component of a probable SUN2:KASH5 LINC complex. Self-associates. Interacts with DYNC1H1, DCTN1, DYNC1I1/2 and PAFAH1B1; suggesting the association with the dynein-dynactin motor complex. As to expression, restricted to the testis and the early ootidogenesis ovary. Expressed in spermatocytes and oocytes (at protein level).

Its subcellular location is the nucleus outer membrane. It localises to the nucleus. It is found in the chromosome. The protein localises to the telomere. The protein resides in the nucleus envelope. Functionally, as a component of the LINC (LInker of Nucleoskeleton and Cytoskeleton) complex, involved in the connection between the nuclear lamina and the cytoskeleton. The nucleocytoplasmic interactions established by the LINC complex play an important role in the transmission of mechanical forces across the nuclear envelope and in nuclear movement and positioning. Required for telomere attachment to nuclear envelope in the prophase of meiosis and for rapid telomere prophase movements implicating a SUN1/2:KASH5 LINC complex in which SUN1 and SUN2 seem to act at least partial redundantly. Required for homolog pairing during meiotic prophase in spermatocytes and probably oocytes. Essential for male and female gametogenesis. Recruits cytoplasmic dynein to telomere attachment sites at the nuclear envelope in spermatocytes. In oocytes is involved in meiotic resumption and spindle formation. The sequence is that of Protein KASH5 from Mus musculus (Mouse).